Here is a 317-residue protein sequence, read N- to C-terminus: TPR repeat-containing thioredoxin TDX (317 aa).

The segment at 1-48 (MATAGASSFEDEIMESDIELEGEAVEPDNDPPQKMGDPSVEVSDEKRD) is disordered. Residues 9–29 (FEDEIMESDIELEGEAVEPDN) show a composition bias toward acidic residues. TPR repeat units follow at residues 50-83 (AQLC…NPTS), 85-117 (IAYA…NPDS), and 119-151 (KGYK…DYDE). Residues 189–316 (EKQRKHAEEV…LERKVAQHGS (128 aa)) enclose the Thioredoxin domain. Catalysis depends on nucleophile residues Cys242 and Cys245. The cysteines at positions 242 and 245 are disulfide-linked.

This sequence belongs to the thioredoxin family.

Functionally, probable thiol-disulfide oxidoreductase that may participate in various redox reactions and act as chaperone under heat shock. May interact with HSP70 proteins through the TPR repeats. In Oryza sativa subsp. japonica (Rice), this protein is TPR repeat-containing thioredoxin TDX.